Here is a 552-residue protein sequence, read N- to C-terminus: Arginine--tRNA ligase (552 aa).

The 'HIGH' region signature appears at 123–133; the sequence is ANPTGPLTIGR.

Belongs to the class-I aminoacyl-tRNA synthetase family. As to quaternary structure, monomer.

Its subcellular location is the cytoplasm. The enzyme catalyses tRNA(Arg) + L-arginine + ATP = L-arginyl-tRNA(Arg) + AMP + diphosphate. The chain is Arginine--tRNA ligase from Pelodictyon phaeoclathratiforme (strain DSM 5477 / BU-1).